The following is a 171-amino-acid chain: ATP synthase subunit b (171 aa).

Residues 32 to 52 traverse the membrane as a helical segment; sequence FFAVLLIFLIVLGVIAKWVVP.

Belongs to the ATPase B chain family. F-type ATPases have 2 components, F(1) - the catalytic core - and F(0) - the membrane proton channel. F(1) has five subunits: alpha(3), beta(3), gamma(1), delta(1), epsilon(1). F(0) has three main subunits: a(1), b(2) and c(10-14). The alpha and beta chains form an alternating ring which encloses part of the gamma chain. F(1) is attached to F(0) by a central stalk formed by the gamma and epsilon chains, while a peripheral stalk is formed by the delta and b chains.

It localises to the cell membrane. Functionally, f(1)F(0) ATP synthase produces ATP from ADP in the presence of a proton or sodium gradient. F-type ATPases consist of two structural domains, F(1) containing the extramembraneous catalytic core and F(0) containing the membrane proton channel, linked together by a central stalk and a peripheral stalk. During catalysis, ATP synthesis in the catalytic domain of F(1) is coupled via a rotary mechanism of the central stalk subunits to proton translocation. In terms of biological role, component of the F(0) channel, it forms part of the peripheral stalk, linking F(1) to F(0). The polypeptide is ATP synthase subunit b (Mycolicibacterium gilvum (strain PYR-GCK) (Mycobacterium gilvum (strain PYR-GCK))).